A 610-amino-acid polypeptide reads, in one-letter code: Glutamine--fructose-6-phosphate aminotransferase [isomerizing] (610 aa).

The active-site Nucleophile; for GATase activity is the cysteine 2. Residues 2–220 (CGIISAISKK…EGDIAILSHK (219 aa)) enclose the Glutamine amidotransferase type-2 domain. SIS domains lie at 289-429 (AHAL…LKTN) and 461-600 (LAKE…IDKP). The active-site For Fru-6P isomerization activity is lysine 605.

Homodimer.

It is found in the cytoplasm. The catalysed reaction is D-fructose 6-phosphate + L-glutamine = D-glucosamine 6-phosphate + L-glutamate. Catalyzes the first step in hexosamine metabolism, converting fructose-6P into glucosamine-6P using glutamine as a nitrogen source. In Buchnera aphidicola subsp. Baizongia pistaciae (strain Bp), this protein is Glutamine--fructose-6-phosphate aminotransferase [isomerizing].